A 132-amino-acid polypeptide reads, in one-letter code: Fatty acid-binding protein, intestinal (132 aa).

Position 2 is an N-acetylalanine (A2). Positions 83 and 107 each coordinate hexadecanoate. Tetradecanoate contacts are provided by W83 and R107.

It belongs to the calycin superfamily. Fatty-acid binding protein (FABP) family.

It is found in the cytoplasm. In terms of biological role, FABPs are thought to play a role in the intracellular transport of long-chain fatty acids and their acyl-CoA esters. The chain is Fatty acid-binding protein, intestinal (fabp2) from Xenopus laevis (African clawed frog).